Reading from the N-terminus, the 380-residue chain is MRCLGLMSGTSADGVDAVLADFRGSPNHPQWDLIRHVHHPYPEALRHRVVSAGQGEPSRADQWLDLAEAITEAQAMAARSCDPHAEAVLVGCHGQTIWHRPPTSQQRGASWQLLQAPLLAQLLERPVVHDFRAADLALGGQGAPLVPKADAALLGGTKGWRALLNLGGIANLTLIPPCCGPDRDASVQGWDCGPANSLIDLAVQQFSNGTLLFDRGGAMAKAGHSDETSIRRWLQEPYFQSPPPKSTGRELFGRANLQQRLNDLGRDCSSQDAVATLTSFSAAVVAQDLEQLMQRDRIRPLELIVAGGGRHNPVLMDQLQQRCRGLQLSSSQEMGLPVEAREALVFALLAWWHQRKHPGNSPSITGATRESVLGVLVHPG.

9 to 16 (GTSADGVD) is an ATP binding site.

This sequence belongs to the anhydro-N-acetylmuramic acid kinase family.

The catalysed reaction is 1,6-anhydro-N-acetyl-beta-muramate + ATP + H2O = N-acetyl-D-muramate 6-phosphate + ADP + H(+). The protein operates within amino-sugar metabolism; 1,6-anhydro-N-acetylmuramate degradation. It participates in cell wall biogenesis; peptidoglycan recycling. In terms of biological role, catalyzes the specific phosphorylation of 1,6-anhydro-N-acetylmuramic acid (anhMurNAc) with the simultaneous cleavage of the 1,6-anhydro ring, generating MurNAc-6-P. Is required for the utilization of anhMurNAc either imported from the medium or derived from its own cell wall murein, and thus plays a role in cell wall recycling. The polypeptide is Anhydro-N-acetylmuramic acid kinase (Synechococcus sp. (strain CC9902)).